The primary structure comprises 434 residues: Serine hydroxymethyltransferase (434 aa).

120–122 (GHI) is a (6S)-5,6,7,8-tetrahydrofolate binding site. An N6-(pyridoxal phosphate)lysine modification is found at Lys236. Glu255 lines the (6S)-5,6,7,8-tetrahydrofolate pocket.

The protein belongs to the SHMT family. Homodimer. Pyridoxal 5'-phosphate is required as a cofactor.

The protein localises to the cytoplasm. The protein operates within amino-acid biosynthesis; glycine biosynthesis; glycine from L-serine: step 1/1. Functionally, catalyzes the reversible interconversion of serine and glycine with a modified folate serving as the one-carbon carrier. Also exhibits a pteridine-independent aldolase activity toward beta-hydroxyamino acids, producing glycine and aldehydes, via a retro-aldol mechanism. In Korarchaeum cryptofilum (strain OPF8), this protein is Serine hydroxymethyltransferase.